Reading from the N-terminus, the 142-residue chain is NTF2-related export protein 2 (142 aa).

Positions 17–136 (AAEEFVNIYY…WKIASDCFRF (120 aa)) constitute an NTF2 domain.

In terms of assembly, associates with NXF1, NXF2, NXF3 and NXF5.

It is found in the nucleus. The protein resides in the cytoplasm. Regulator of protein export for NES-containing proteins. Also plays a role in mRNA nuclear export. The polypeptide is NTF2-related export protein 2 (NXT2) (Bos taurus (Bovine)).